The primary structure comprises 375 residues: MEVPRLDHALSSPSSPCEEIKNLSLEAIQLCDRDGNKSQDSGIAEMEELPVPHNIKINNITCDSFKISWDMDSKSKDRITHYFIDLNKKENKNSNKFKHKDVPTKLVAKAVPLPMTVRGHWFLSPRTEYTVAVQTASKQVDGDYVVSEWSEIIEFCTADYSKVHLTQLLEKADVIAGRMLKFSVFYRNQHKEYFDYVREHYGNAMQPSIKDNSGSHGSPISGKLEGIFFSCSTEFNTGKPPQDSPYGRYRFEIAAEKLFNPNTNLYFGDFYCMYTAYHYVILVIAPVGSPGDEFCKQRLPQLNSKDNNFLTCTEEDGVLVYHHAQDVILEVIYTDPVALSLGTVAEITGHQLMSLSTANAKKDPSCKTCNISVGR.

Residues S11, S12, and S15 each carry the phosphoserine modification. N22 is a glycosylation site (N-linked (GlcNAc...) asparagine). S24 is subject to Phosphoserine. Residue N36 is glycosylated (N-linked (GlcNAc...) asparagine). The region spanning 51 to 160 (VPHNIKINNI…EIIEFCTADY (110 aa)) is the Fibronectin type-III domain.

This sequence belongs to the PHYHIP family.

Its function is as follows. May play a role in the development of the central system. The polypeptide is Phytanoyl-CoA hydroxylase-interacting protein-like (Phyhipl) (Mus musculus (Mouse)).